The chain runs to 273 residues: Eukaryotic translation initiation factor 3 subunit J (273 aa).

A disordered region spans residues 1–158 (MPTKKWEDEE…DPSDPSKTVE (158 aa)). Acidic residues predominate over residues 34-54 (DEEANDSDVLDSWDAAEDSEV). Residues 50–97 (EDSEVEREKAKKAAEAKAKAEAEAKANKKTKAARINEHKQRRKEAEES) adopt a coiled-coil conformation. Basic and acidic residues predominate over residues 55 to 75 (EREKAKKAAEAKAKAEAEAKA). Acidic residues predominate over residues 95–104 (EESDESDDET). The segment covering 105–126 (ESQRRERLRRTEKEADLAHAED) has biased composition (basic and acidic residues).

It belongs to the eIF-3 subunit J family. In terms of assembly, component of the eukaryotic translation initiation factor 3 (eIF-3) complex.

The protein localises to the cytoplasm. Component of the eukaryotic translation initiation factor 3 (eIF-3) complex, which is involved in protein synthesis of a specialized repertoire of mRNAs and, together with other initiation factors, stimulates binding of mRNA and methionyl-tRNAi to the 40S ribosome. The eIF-3 complex specifically targets and initiates translation of a subset of mRNAs involved in cell proliferation. The protein is Eukaryotic translation initiation factor 3 subunit J of Pyricularia oryzae (strain 70-15 / ATCC MYA-4617 / FGSC 8958) (Rice blast fungus).